We begin with the raw amino-acid sequence, 263 residues long: Tryptophan synthase alpha chain (263 aa).

Residues E49 and D60 each act as proton acceptor in the active site.

It belongs to the TrpA family. As to quaternary structure, tetramer of two alpha and two beta chains.

It catalyses the reaction (1S,2R)-1-C-(indol-3-yl)glycerol 3-phosphate + L-serine = D-glyceraldehyde 3-phosphate + L-tryptophan + H2O. It participates in amino-acid biosynthesis; L-tryptophan biosynthesis; L-tryptophan from chorismate: step 5/5. Functionally, the alpha subunit is responsible for the aldol cleavage of indoleglycerol phosphate to indole and glyceraldehyde 3-phosphate. This chain is Tryptophan synthase alpha chain, found in Roseobacter denitrificans (strain ATCC 33942 / OCh 114) (Erythrobacter sp. (strain OCh 114)).